The chain runs to 226 residues: Methylamine utilization ferredoxin-type protein MauM (226 aa).

4Fe-4S ferredoxin-type domains follow at residues 59–87 (PEPE…LASW), 95–127 (TPYF…PLLT), 136–172 (VAVL…LKQI), and 180–211 (QIPT…LLPR). Cysteine 67, cysteine 70, cysteine 73, cysteine 77, cysteine 105, cysteine 108, cysteine 113, cysteine 117, cysteine 145, cysteine 153, cysteine 156, cysteine 160, cysteine 189, cysteine 192, cysteine 195, and cysteine 199 together coordinate [4Fe-4S] cluster.

Its pathway is one-carbon metabolism; methylamine degradation. Involved in electron transfer. In Methylophilus methylotrophus (Bacterium W3A1), this protein is Methylamine utilization ferredoxin-type protein MauM (mauM).